Consider the following 647-residue polypeptide: MGDAGVASQRPHNRRGTRNVRVSANTVTVNGRRNQRRRTGRQVSPPDNFTAAAQDLAQSLDANTVTFPANISSMPEFRNWAKGKIDLDSDSIGWYFKYLDPAGATESARAVGEYSKIPDGLVKFSVDAEIREIYNEECPVVTDVSVPLDGRQWSLSIFSFPMFRTAYVAVANVENKEMSLDVVNDLIEWLNNLADWRYVVDSEQWINFTNDTTYYVRIRVLRPTYDVPDPTEGLVRTVSDYRLTYKAITCEANMPTLVDQGFWIGGQYALTPTSLPQYDVSEAYALHTLTFARPSSAAALAFVWAGLPQGGTAPAGTPAWEQASSGGYLTWRHNGTTFPAGSVSYVLPEGFALERYDPNDGSWTDFASAGDTVTFRQVAVDEVVVTNNPAGGGSAPTFTVRVPPSNAYTNTVFRNTLLETRPSSRRLELPMPPADFGQTVANNPKIEQSLLKETLGCYLVHSKMRNPVFQLTPASSFGAVSFNNPGYERTRDLPDYTGIRDSFDQNMSTAVAHFRSLSHSCSIVTKTYQGWEGVTNVNTPFGQFAHAGLLKNEEILCLADDLATRLTGVYPATDNFAAAVSAFAANMLSSVLKSEATSSIIKSVGETAVGAAQSGLAKLPGLLMSVPGKIAARVRARRARRRAARAN.

Positions 1 to 48 (MGDAGVASQRPHNRRGTRNVRVSANTVTVNGRRNQRRRTGRQVSPPDN) are disordered.

The protein belongs to the tetravirus capsid protein family.

Its subcellular location is the virion. Functionally, self-assembles to form an icosahedral capsid with a T=4 symmetry, about 35 nm in diameter, and consisting of 240 copies of the two structural proteins. The sequence is that of Capsid protein (p71) from Helicoverpa armigera (Cotton bollworm).